Reading from the N-terminus, the 156-residue chain is Longistatin (156 aa).

A signal peptide spans 1-21; the sequence is MTHRRLLWALCVAALLGVVAA. 2 EF-hand domains span residues 70 to 105 and 123 to 156; these read SQDELYFYYFRMHDFDNNNKLDGQEMMAAMFHTNHH and DIASYVDSVLRADKNQDGFISYPELRTSDLTNQI. The Ca(2+) site is built by Asp83, Asp85, Asn87, Lys89, Glu94, Asp135, Asn137, Asp139, Phe141, and Glu146.

Interacts with host fibrin. Interacts with human RAGE/AGER. As to expression, saliva (at protein level). Salivary gland (at protein level). Not detected in midgut, ovary, trachea, Malpighian tubule system, synganglion and cuticle.

The protein localises to the secreted. The protein resides in the cytoplasm. Its activity is regulated as follows. Resistant to inhibition by host SERPINE1. Inhibited by PMSF, aprotinin, antipain and leupeptin. Inhibited by Zn(2+). Its function is as follows. Anticoagulant and fibrinolytic protease that modulates blood feeding of ticks on vertebrate hosts. Degrades host fibrinogen and delays fibrin clot formation. Promotes lysis of fibrin clots in the host by activating host plasminogen in the presence of soluble fibrin. Binds Ca(2+). Hydrolyzes serine protease-specific substrates. Required for the formation of a blood pool, an accumulation of blood and tissue fluid developed at the tick's feeding site. Blocks activation of host AGER/RAGE. Reduces AGER/RAGE-dependent production of reactive oxygen species (ROS) in human endothelial cells. Prevents AGER/RAGE-dependent activation of NF-kappa-B and suppresses expression of adhesion molecules, such as VCAM1, ICAM1 and SELE, and secretion of cytokines, such as CSF3/GCSF and TGF-beta, in human endothelial cells. Suppresses RAGE/AGER-mediated migration of mouse peritoneal resident cells. Reduces AGER/RAGE-mediated inflammation in mice tissues. This Haemaphysalis longicornis (Bush tick) protein is Longistatin.